Reading from the N-terminus, the 196-residue chain is dITP/XTP pyrophosphatase (196 aa).

Substrate is bound at residue 7–12 (TGNAGK). Mg(2+) contacts are provided by glutamate 39 and aspartate 68. The active-site Proton acceptor is the aspartate 68. Residues serine 69, 153 to 156 (HGYD), lysine 176, and 181 to 182 (HR) contribute to the substrate site.

It belongs to the HAM1 NTPase family. As to quaternary structure, homodimer. The cofactor is Mg(2+).

It catalyses the reaction XTP + H2O = XMP + diphosphate + H(+). It carries out the reaction dITP + H2O = dIMP + diphosphate + H(+). The enzyme catalyses ITP + H2O = IMP + diphosphate + H(+). Pyrophosphatase that catalyzes the hydrolysis of nucleoside triphosphates to their monophosphate derivatives, with a high preference for the non-canonical purine nucleotides XTP (xanthosine triphosphate), dITP (deoxyinosine triphosphate) and ITP. Seems to function as a house-cleaning enzyme that removes non-canonical purine nucleotides from the nucleotide pool, thus preventing their incorporation into DNA/RNA and avoiding chromosomal lesions. This Thioalkalivibrio sulfidiphilus (strain HL-EbGR7) protein is dITP/XTP pyrophosphatase.